The following is a 298-amino-acid chain: MSVVSSVTVKVPGTTANLGPGFDCIGAALTIYNQFQFTRLEESGLIIQATGAEAERVPTDESNLIYQAFAKLYQYIDQPAPGVKIEIELGVPLARGLGSSATAIVAANRLAGEPLSQAQVMALAIAIEGHPDNVVPALLGGCRLAATGASGWEICDVPWHSHIVPVLAIPDFELSTSEARRVLPTEYSRADAIFNTAHLGLLLRGLETGKGEWLRAALQDKLHQPYRQALIPGYDAVNTAAVAAGAYGMVISGAGPTLLALADVSHAAAVEAAMSTAWQEAGITAVVRSLALDTHGAT.

92–102 (PLARGLGSSAT) serves as a coordination point for ATP.

This sequence belongs to the GHMP kinase family. Homoserine kinase subfamily.

It is found in the cytoplasm. It carries out the reaction L-homoserine + ATP = O-phospho-L-homoserine + ADP + H(+). It functions in the pathway amino-acid biosynthesis; L-threonine biosynthesis; L-threonine from L-aspartate: step 4/5. Functionally, catalyzes the ATP-dependent phosphorylation of L-homoserine to L-homoserine phosphate. The sequence is that of Homoserine kinase (thrB) from Nostoc sp. (strain PCC 7120 / SAG 25.82 / UTEX 2576).